The primary structure comprises 166 residues: Large ribosomal subunit protein uL10 (166 aa).

This sequence belongs to the universal ribosomal protein uL10 family. As to quaternary structure, part of the ribosomal stalk of the 50S ribosomal subunit. The N-terminus interacts with L11 and the large rRNA to form the base of the stalk. The C-terminus forms an elongated spine to which L12 dimers bind in a sequential fashion forming a multimeric L10(L12)X complex.

Its function is as follows. Forms part of the ribosomal stalk, playing a central role in the interaction of the ribosome with GTP-bound translation factors. The protein is Large ribosomal subunit protein uL10 of Aeromonas salmonicida (strain A449).